The primary structure comprises 439 residues: S-layer protein (439 aa).

Residues 1–30 (MKKNLRIVSAAAAALLAVAPIAATAMPVNA) form the signal peptide.

Post-translationally, glycosylated.

The protein localises to the secreted. It is found in the cell wall. It localises to the S-layer. Its function is as follows. The S-layer is a paracrystalline mono-layered assembly of proteins which coat the surface of bacteria. In Lactobacillus helveticus (Lactobacillus suntoryeus), this protein is S-layer protein (slpH).